A 442-amino-acid polypeptide reads, in one-letter code: L-seryl-tRNA(Sec) selenium transferase (442 aa).

Lysine 284 bears the N6-(pyridoxal phosphate)lysine mark.

This sequence belongs to the SelA family. It depends on pyridoxal 5'-phosphate as a cofactor.

The protein resides in the cytoplasm. The enzyme catalyses L-seryl-tRNA(Sec) + selenophosphate + H(+) = L-selenocysteinyl-tRNA(Sec) + phosphate. It participates in aminoacyl-tRNA biosynthesis; selenocysteinyl-tRNA(Sec) biosynthesis; selenocysteinyl-tRNA(Sec) from L-seryl-tRNA(Sec) (bacterial route): step 1/1. Functionally, converts seryl-tRNA(Sec) to selenocysteinyl-tRNA(Sec) required for selenoprotein biosynthesis. The polypeptide is L-seryl-tRNA(Sec) selenium transferase (Campylobacter fetus subsp. fetus (strain 82-40)).